We begin with the raw amino-acid sequence, 289 residues long: Shikimate kinase (289 aa).

84-94 (PVASGLSSSSA) serves as a coordination point for ATP.

The protein belongs to the GHMP kinase family. Archaeal shikimate kinase subfamily.

It localises to the cytoplasm. It carries out the reaction shikimate + ATP = 3-phosphoshikimate + ADP + H(+). Its pathway is metabolic intermediate biosynthesis; chorismate biosynthesis; chorismate from D-erythrose 4-phosphate and phosphoenolpyruvate: step 5/7. This Methanothermobacter thermautotrophicus (strain ATCC 29096 / DSM 1053 / JCM 10044 / NBRC 100330 / Delta H) (Methanobacterium thermoautotrophicum) protein is Shikimate kinase (aroK).